The primary structure comprises 140 residues: HTH-type transcriptional regulator LysM (140 aa).

Residues 4-67 (VDESDLKILE…ELENEIRAIV (64 aa)) form the HTH asnC-type domain. A DNA-binding region (H-T-H motif) is located at residues 23 to 42 (YTSIAKELKISEAAVRKRIE).

As to quaternary structure, homotetramer.

It localises to the cytoplasm. The protein operates within amino-acid biosynthesis; L-lysine biosynthesis via AAA pathway [regulation]. Functionally, in the absence or at low concentrations of lysine, activates the biosynthesis of this amino acid via the alpha-aminoadipate (AAA) pathway. The chain is HTH-type transcriptional regulator LysM (lysM) from Sulfurisphaera tokodaii (strain DSM 16993 / JCM 10545 / NBRC 100140 / 7) (Sulfolobus tokodaii).